Consider the following 667-residue polypeptide: YTH domain-containing protein ECT2 (667 aa).

2 disordered regions span residues 264-305 and 379-398; these read QRPV…PSSV and NELNRGPRAKGTKNQKGNLD. Residues 267 to 285 show a composition bias toward low complexity; sequence VSGSGVASSYSKSSTVPSS. Polar residues predominate over residues 286–305; that stretch reads RNQNYRSNSHYTSVHQPSSV. A YTH domain is found at 442 to 579; that stretch reads AMFFIIKSYS…EQGLKIVKIF (138 aa). Residues 448–450, D454, 464–465, N497, W521, W526, and W534 contribute to the RNA site; these read KSY and WA. The interval 606 to 667 is disordered; that stretch reads KAKQTQKQVS…VTGDVVANGC (62 aa). Residues 614–627 show a composition bias toward basic and acidic residues; sequence VSEEKVTDEKKESA. Positions 628-639 are enriched in low complexity; the sequence is TAESASKESPAA.

As to quaternary structure, interacts (via C-terminus) with CIPK1. Expressed in the shoot apex, at the sites of leaf formation, and in emerging leaves. Highly expressed in rapidly developing tissues.

Its subcellular location is the cytoplasm. The protein resides in the nucleus. Functionally, specifically recognizes and binds N6-methyladenosine (m6A)-containing RNAs, and regulates mRNA stability. M6A is a modification present at internal sites of mRNAs and some non-coding RNAs and plays a role in mRNA stability and processing. Binds preferentially in the 3'UTRs of target genes. May play dual roles in regulating 3'UTR processing in the nucleus and facilitating mRNA stability in the cytoplasm. Required for the correct timing of leaf formation and normal leaf morphology. Functions redundantly with ECT3. Required for proper trichome branching and morphology. Controls trichome morphology by binding transcripts related to trichome morphogenesis and affecting their stability. In Arabidopsis thaliana (Mouse-ear cress), this protein is YTH domain-containing protein ECT2.